A 354-amino-acid polypeptide reads, in one-letter code: Ferrochelatase (354 aa).

Fe cation contacts are provided by histidine 191 and glutamate 271.

This sequence belongs to the ferrochelatase family.

Its subcellular location is the cytoplasm. The catalysed reaction is heme b + 2 H(+) = protoporphyrin IX + Fe(2+). It functions in the pathway porphyrin-containing compound metabolism; protoheme biosynthesis; protoheme from protoporphyrin-IX: step 1/1. Catalyzes the ferrous insertion into protoporphyrin IX. The protein is Ferrochelatase of Rickettsia bellii (strain OSU 85-389).